We begin with the raw amino-acid sequence, 1032 residues long: Beta-galactosidase (1032 aa).

Substrate-binding residues include N100 and D198. D198 is a Na(+) binding site. The Mg(2+) site is built by E413, H415, and E458. Substrate-binding positions include E458 and 534 to 537 (EYAH). The active-site Proton donor is E458. E534 serves as the catalytic Nucleophile. N594 is a Mg(2+) binding site. 2 residues coordinate Na(+): F598 and N601. Positions 601 and 1006 each coordinate substrate.

It belongs to the glycosyl hydrolase 2 family. As to quaternary structure, homotetramer. It depends on Mg(2+) as a cofactor. Requires Na(+) as cofactor.

The enzyme catalyses Hydrolysis of terminal non-reducing beta-D-galactose residues in beta-D-galactosides.. The chain is Beta-galactosidase from Vibrio vulnificus (strain CMCP6).